A 660-amino-acid chain; its full sequence is Transcription activator of gluconeogenesis CHGG_09150 (660 aa).

The segment covering M1–D12 has biased composition (acidic residues). The interval M1–R52 is disordered. Composition is skewed to basic and acidic residues over residues Q13–D24 and A36–R49. The zn(2)-C6 fungal-type DNA-binding region spans C59 to C87. Disordered stretches follow at residues L98–S144, F170–G191, and P319–N368. Residues S129 to S144 are compositionally biased toward polar residues. The span at Q173 to S184 shows a compositional bias: low complexity. Composition is skewed to polar residues over residues T320–P332 and T344–N368. Residues S455 to T526 form the PAS domain. Residues A587–L613 are disordered.

Belongs to the ERT1/acuK family.

The protein localises to the nucleus. In terms of biological role, transcription factor which regulates nonfermentable carbon utilization. Activator of gluconeogenetic genes. The protein is Transcription activator of gluconeogenesis CHGG_09150 of Chaetomium globosum (strain ATCC 6205 / CBS 148.51 / DSM 1962 / NBRC 6347 / NRRL 1970) (Soil fungus).